A 345-amino-acid polypeptide reads, in one-letter code: Protease HtpX homolog (345 aa).

2 consecutive transmembrane segments (helical) span residues 6-26 (TAML…LVGG) and 27-47 (SNGM…SYWN). A Zn(2+)-binding site is contributed by His-130. The active site involves Glu-131. His-134 contacts Zn(2+). Transmembrane regions (helical) follow at residues 145-165 (LTAT…FMGG) and 179-199 (IGGL…QMAI). Glu-204 provides a ligand contact to Zn(2+).

The protein belongs to the peptidase M48B family. Zn(2+) serves as cofactor.

The protein localises to the cell inner membrane. This Bartonella henselae (strain ATCC 49882 / DSM 28221 / CCUG 30454 / Houston 1) (Rochalimaea henselae) protein is Protease HtpX homolog.